We begin with the raw amino-acid sequence, 504 residues long: Probable GTP-binding protein OBGC2 (504 aa).

The span at 24–39 (AHRDARPALRLPELHA) shows a compositional bias: basic and acidic residues. Disordered regions lie at residues 24–46 (AHRDARPALRLPELHATRRRRNN) and 93–122 (VLAMPASPSTDAPKSPRRRSDKGKRSGVKK). In terms of domain architecture, Obg spans 73-276 (HKYFDHAVVT…VSLELILRVV (204 aa)). The span at 107–122 (SPRRRSDKGKRSGVKK) shows a compositional bias: basic residues. Residues 277–494 (ADVGLVGLPN…MLKEIRAALR (218 aa)) form the OBG-type G domain. GTP-binding positions include 283–290 (GLPNAGKS) and 337–341 (DLPGL). Residues 436–452 (SEDSLNGNTGEHNTSSE) show a composition bias toward polar residues. The tract at residues 436–463 (SEDSLNGNTGEHNTSSETKVEGGEKELR) is disordered. Basic and acidic residues predominate over residues 453 to 463 (TKVEGGEKELR).

It belongs to the TRAFAC class OBG-HflX-like GTPase superfamily. OBG GTPase family.

Its function is as follows. May bind GTP and have GTPase activity. The protein is Probable GTP-binding protein OBGC2 of Oryza sativa subsp. japonica (Rice).